The chain runs to 260 residues: Octanoyltransferase (260 aa).

A BPL/LPL catalytic domain is found at 42–241 (PQVPDGLLLL…SFCQVFGLQA (200 aa)). Residues 97–104 (RGGEVTYH), 172–174 (AIG), and 185–187 (GFA) contribute to the substrate site. Cysteine 203 serves as the catalytic Acyl-thioester intermediate.

Belongs to the LipB family.

The protein resides in the cytoplasm. The catalysed reaction is octanoyl-[ACP] + L-lysyl-[protein] = N(6)-octanoyl-L-lysyl-[protein] + holo-[ACP] + H(+). It functions in the pathway protein modification; protein lipoylation via endogenous pathway; protein N(6)-(lipoyl)lysine from octanoyl-[acyl-carrier-protein]: step 1/2. Functionally, catalyzes the transfer of endogenously produced octanoic acid from octanoyl-acyl-carrier-protein onto the lipoyl domains of lipoate-dependent enzymes. Lipoyl-ACP can also act as a substrate although octanoyl-ACP is likely to be the physiological substrate. The protein is Octanoyltransferase of Synechococcus sp. (strain JA-3-3Ab) (Cyanobacteria bacterium Yellowstone A-Prime).